The primary structure comprises 361 residues: Histidinol-phosphate aminotransferase (361 aa).

Residue Lys-219 is modified to N6-(pyridoxal phosphate)lysine.

Belongs to the class-II pyridoxal-phosphate-dependent aminotransferase family. Histidinol-phosphate aminotransferase subfamily. In terms of assembly, homodimer. Requires pyridoxal 5'-phosphate as cofactor.

The catalysed reaction is L-histidinol phosphate + 2-oxoglutarate = 3-(imidazol-4-yl)-2-oxopropyl phosphate + L-glutamate. Its pathway is amino-acid biosynthesis; L-histidine biosynthesis; L-histidine from 5-phospho-alpha-D-ribose 1-diphosphate: step 7/9. The protein is Histidinol-phosphate aminotransferase of Acinetobacter baumannii (strain AB307-0294).